The following is a 228-amino-acid chain: Somatolactin (228 aa).

The first 24 residues, 1–24, serve as a signal peptide directing secretion; the sequence is MFSIRMNKVLQGFVCLMLTHRIVG. 3 disulfides stabilise this stretch: C29–C38, C88–C200, and C217–C225. N141 and N177 each carry an N-linked (GlcNAc...) asparagine glycan.

This sequence belongs to the somatotropin/prolactin family.

Its subcellular location is the secreted. This chain is Somatolactin, found in Anguilla anguilla (European freshwater eel).